We begin with the raw amino-acid sequence, 134 residues long: Putative membrane protein insertion efficiency factor (134 aa).

It belongs to the UPF0161 family.

Its subcellular location is the cell inner membrane. Its function is as follows. Could be involved in insertion of integral membrane proteins into the membrane. The sequence is that of Putative membrane protein insertion efficiency factor from Rhizobium etli (strain ATCC 51251 / DSM 11541 / JCM 21823 / NBRC 15573 / CFN 42).